The primary structure comprises 147 residues: Peptide methionine sulfoxide reductase MsrB (147 aa).

Residues 1–11 show a composition bias toward basic and acidic residues; that stretch reads MPKIVKKEPKF. The tract at residues 1–25 is disordered; it reads MPKIVKKEPKFVEQSGKKVTKSDEQ. Positions 23 to 145 constitute a MsrB domain; sequence DEQWREQLSD…NSVSLIFNKS (123 aa). Cys-62, Cys-65, Cys-111, and Cys-114 together coordinate Zn(2+). The active-site Nucleophile is Cys-134.

The protein belongs to the MsrB Met sulfoxide reductase family. The cofactor is Zn(2+).

The enzyme catalyses L-methionyl-[protein] + [thioredoxin]-disulfide + H2O = L-methionyl-(R)-S-oxide-[protein] + [thioredoxin]-dithiol. This is Peptide methionine sulfoxide reductase MsrB from Vibrio parahaemolyticus serotype O3:K6 (strain RIMD 2210633).